Consider the following 403-residue polypeptide: Phosphoserine phosphatase RsbP (403 aa).

A PAS domain is found at methionine 1–glutamine 42. Residues glutamine 191 to valine 402 enclose the PPM-type phosphatase domain.

Mn(2+) is required as a cofactor.

The catalysed reaction is O-phospho-L-serine + H2O = L-serine + phosphate. The enzyme catalyses O-phospho-D-serine + H2O = D-serine + phosphate. Positive regulator of sigma-B activity. Dephosphorylates RsbV in response to energy stress. This Bacillus subtilis (strain 168) protein is Phosphoserine phosphatase RsbP (rsbP).